We begin with the raw amino-acid sequence, 138 residues long: Basic phospholipase A2 beta-bungarotoxin A-AL3 chain (138 aa).

Positions 1 to 10 are cleaved as a signal peptide; sequence LAVCVSLIGA. Residues 11-18 constitute a propeptide that is removed on maturation; it reads ANIPPQHL. Disulfide bonds link cysteine 45–cysteine 137, cysteine 47–cysteine 63, cysteine 62–cysteine 118, cysteine 69–cysteine 111, cysteine 79–cysteine 104, and cysteine 97–cysteine 109. 3 residues coordinate Ca(2+): tyrosine 46, glycine 48, and glycine 50. The active site involves histidine 66. Aspartate 67 contributes to the Ca(2+) binding site. Aspartate 112 is a catalytic residue.

This sequence belongs to the phospholipase A2 family. Group I subfamily. D49 sub-subfamily. As to quaternary structure, heterodimer; disulfide-linked. The A chains have phospholipase A2 activity and the B chains show homology with the basic protease inhibitors. It depends on Ca(2+) as a cofactor. In terms of tissue distribution, expressed by the venom gland.

It is found in the secreted. It carries out the reaction a 1,2-diacyl-sn-glycero-3-phosphocholine + H2O = a 1-acyl-sn-glycero-3-phosphocholine + a fatty acid + H(+). Functionally, snake venom phospholipase A2 (PLA2) that inhibits neuromuscular transmission by blocking acetylcholine release from the nerve termini. PLA2 catalyzes the calcium-dependent hydrolysis of the 2-acyl groups in 3-sn-phosphoglycerides. The polypeptide is Basic phospholipase A2 beta-bungarotoxin A-AL3 chain (Bungarus multicinctus (Many-banded krait)).